The primary structure comprises 131 residues: DNA-directed RNA polymerase subunit omega (131 aa).

Residues 78 to 131 (DEPEAEAVPALSSAPDAAQSDAMGDVQFDRMTEEDLLRGLEGLVPPAATDDDGE) are disordered. The segment covering 104-115 (QFDRMTEEDLLR) has biased composition (basic and acidic residues).

This sequence belongs to the RNA polymerase subunit omega family. The RNAP catalytic core consists of 2 alpha, 1 beta, 1 beta' and 1 omega subunit. When a sigma factor is associated with the core the holoenzyme is formed, which can initiate transcription.

It carries out the reaction RNA(n) + a ribonucleoside 5'-triphosphate = RNA(n+1) + diphosphate. Functionally, promotes RNA polymerase assembly. Latches the N- and C-terminal regions of the beta' subunit thereby facilitating its interaction with the beta and alpha subunits. The protein is DNA-directed RNA polymerase subunit omega of Beijerinckia indica subsp. indica (strain ATCC 9039 / DSM 1715 / NCIMB 8712).